Consider the following 372-residue polypeptide: UDP-N-acetylglucosamine--N-acetylmuramyl-(pentapeptide) pyrophosphoryl-undecaprenol N-acetylglucosamine transferase (372 aa).

UDP-N-acetyl-alpha-D-glucosamine contacts are provided by residues 14–16 (TGG), N128, R169, S201, I257, and Q302.

The protein belongs to the glycosyltransferase 28 family. MurG subfamily.

The protein resides in the cell inner membrane. It catalyses the reaction di-trans,octa-cis-undecaprenyl diphospho-N-acetyl-alpha-D-muramoyl-L-alanyl-D-glutamyl-meso-2,6-diaminopimeloyl-D-alanyl-D-alanine + UDP-N-acetyl-alpha-D-glucosamine = di-trans,octa-cis-undecaprenyl diphospho-[N-acetyl-alpha-D-glucosaminyl-(1-&gt;4)]-N-acetyl-alpha-D-muramoyl-L-alanyl-D-glutamyl-meso-2,6-diaminopimeloyl-D-alanyl-D-alanine + UDP + H(+). It functions in the pathway cell wall biogenesis; peptidoglycan biosynthesis. In terms of biological role, cell wall formation. Catalyzes the transfer of a GlcNAc subunit on undecaprenyl-pyrophosphoryl-MurNAc-pentapeptide (lipid intermediate I) to form undecaprenyl-pyrophosphoryl-MurNAc-(pentapeptide)GlcNAc (lipid intermediate II). This chain is UDP-N-acetylglucosamine--N-acetylmuramyl-(pentapeptide) pyrophosphoryl-undecaprenol N-acetylglucosamine transferase, found in Bacteroides thetaiotaomicron (strain ATCC 29148 / DSM 2079 / JCM 5827 / CCUG 10774 / NCTC 10582 / VPI-5482 / E50).